The chain runs to 145 residues: Lysozyme-like protein 4 (145 aa).

Residues 1 to 19 (MQLYLVLLLISYLLTPIGA) form the signal peptide. Residues 20–145 (SILGRCVVAK…LDRWLDGCEL (126 aa)) form the C-type lysozyme domain. 4 cysteine pairs are disulfide-bonded: cysteine 25–cysteine 143, cysteine 49–cysteine 130, cysteine 84–cysteine 95, and cysteine 91–cysteine 109. The active site involves glutamate 54.

This sequence belongs to the glycosyl hydrolase 22 family. As to quaternary structure, monomer. As to expression, expressed in the brain, lung, ovary, uterus and testis. In testis expressed in the germinal epithelium and on the maturing spermatozoa (at protein level).

The protein localises to the secreted. It localises to the cytoplasmic vesicle. The protein resides in the secretory vesicle. Its subcellular location is the acrosome. It is found in the cell projection. The protein localises to the cilium. It localises to the flagellum. Functionally, may be involved in fertilization. Has no detectable bacteriolytic and lysozyme activities in vitro. The chain is Lysozyme-like protein 4 (Lyzl4) from Rattus norvegicus (Rat).